A 245-amino-acid chain; its full sequence is MTLTASSSSRAVTNSPVVVALDYHNRDDALSFVDKIDPRDCRLKVGKEMFTLFGPQFVRELQQRGFDIFLDLKFHDIPNTAAHAVAAAADLGVWMVNVHASGGARMMTAAREALVPYGKDAPLLIAVTVLTSMEASDLADLGVTLSPADYAERLAALTQKCGFDGVVCSAQEAVRFKQVFGQEFKLVTPGIRPQGSDAGDQRRIMTPEQALAAGVDYMVIGRPVTQSVDPAQTLKAINASLQRSA.

Substrate contacts are provided by residues aspartate 22, lysine 44, aspartate 71–threonine 80, threonine 131, arginine 192, glutamine 201, glycine 221, and arginine 222. Lysine 73 acts as the Proton donor in catalysis.

This sequence belongs to the OMP decarboxylase family. Type 1 subfamily. In terms of assembly, homodimer.

The enzyme catalyses orotidine 5'-phosphate + H(+) = UMP + CO2. The protein operates within pyrimidine metabolism; UMP biosynthesis via de novo pathway; UMP from orotate: step 2/2. Functionally, catalyzes the decarboxylation of orotidine 5'-monophosphate (OMP) to uridine 5'-monophosphate (UMP). The protein is Orotidine 5'-phosphate decarboxylase of Shigella dysenteriae serotype 1 (strain Sd197).